A 246-amino-acid polypeptide reads, in one-letter code: Probable transcriptional regulatory protein CGSHiEE_01480 (246 aa).

Belongs to the TACO1 family.

It localises to the cytoplasm. In Haemophilus influenzae (strain PittEE), this protein is Probable transcriptional regulatory protein CGSHiEE_01480.